We begin with the raw amino-acid sequence, 433 residues long: Transcriptional enhancer factor TEF-5 (433 aa).

The segment covering 1-12 has biased composition (polar residues); sequence MASNSWNASSSP. The disordered stretch occupies residues 1–35; that stretch reads MASNSWNASSSPGEGREDGQDGMDKSLDNDAEGVW. Residues 14-28 show a composition bias toward basic and acidic residues; that stretch reads EGREDGQDGMDKSLD. Residues 28–104 constitute a DNA-binding region (TEA); it reads DNDAEGVWSP…QVLARREISG (77 aa). Residues 171–433 are transcriptional activation; sequence GPSQDIKPFA…QHHVYKLVKD (263 aa).

In terms of tissue distribution, high levels in cardiac muscle, low in skeletal muscle. Intermediate levels in gizzard and lung, low levels in kidney.

Its subcellular location is the nucleus. Functionally, transcription factor which plays a key role in the Hippo signaling pathway, a pathway involved in organ size control and tumor suppression by restricting proliferation and promoting apoptosis. The core of this pathway is composed of a kinase cascade wherein MST1/MST2, in complex with its regulatory protein SAV1, phosphorylates and activates LATS1/2 in complex with its regulatory protein MOB1, which in turn phosphorylates and inactivates YAP1 oncoprotein and WWTR1/TAZ. The polypeptide is Transcriptional enhancer factor TEF-5 (TEAD3) (Gallus gallus (Chicken)).